Consider the following 359-residue polypeptide: Threonine dehydratase biosynthetic, chloroplastic (359 aa).

ACT-like domains lie at 184-256 (ALLA…NFSH) and 278-349 (IFGE…LDNS).

The protein belongs to the serine/threonine dehydratase family. In terms of assembly, homotetramer. The cofactor is pyridoxal 5'-phosphate. In terms of tissue distribution, floral buds of untreated plants. After ABA treatment or mechanical wounding is mostly accumulated in leaves, to a lesser extent in stems, but not in roots. Expressed in anthers, carpel leaves, pith cells, sepals and petals. Not expressed in stomium, vascular bundles, epidermal cells or pollen mother cells.

Its subcellular location is the plastid. It is found in the chloroplast. The enzyme catalyses L-threonine = 2-oxobutanoate + NH4(+). Its pathway is amino-acid biosynthesis; L-isoleucine biosynthesis; 2-oxobutanoate from L-threonine: step 1/1. The protein is Threonine dehydratase biosynthetic, chloroplastic of Solanum tuberosum (Potato).